We begin with the raw amino-acid sequence, 56 residues long: Large ribosomal subunit protein bL32 (56 aa).

A disordered region spans residues 1–34 (MAVQQNKPSRSKRGMRRAHDALKTSTISVDKTSG).

It belongs to the bacterial ribosomal protein bL32 family.

In Baumannia cicadellinicola subsp. Homalodisca coagulata, this protein is Large ribosomal subunit protein bL32.